The chain runs to 125 residues: UPF0593 mitochondrial protein C806.05 (125 aa).

It belongs to the UPF0593 family.

The protein resides in the mitochondrion. The protein is UPF0593 mitochondrial protein C806.05 of Schizosaccharomyces pombe (strain 972 / ATCC 24843) (Fission yeast).